A 152-amino-acid chain; its full sequence is Methylglyoxal synthase (152 aa).

One can recognise an MGS-like domain in the interval 6–152; the sequence is RTIPAQKHIA…YQRYLQDRLK (147 aa). Substrate-binding positions include histidine 19, lysine 23, 45–48, and 65–66; these read TGTT and SG. Catalysis depends on aspartate 71, which acts as the Proton donor/acceptor. Histidine 98 lines the substrate pocket.

Belongs to the methylglyoxal synthase family.

The catalysed reaction is dihydroxyacetone phosphate = methylglyoxal + phosphate. Its function is as follows. Catalyzes the formation of methylglyoxal from dihydroxyacetone phosphate. In Pectobacterium atrosepticum (strain SCRI 1043 / ATCC BAA-672) (Erwinia carotovora subsp. atroseptica), this protein is Methylglyoxal synthase.